The sequence spans 758 residues: 5-methyltetrahydropteroyltriglutamate--homocysteine methyltransferase (758 aa).

Residues 17–20 and Lys114 each bind 5-methyltetrahydropteroyltri-L-glutamate; that span reads RELK. Residues 429–431 and Glu482 each bind L-homocysteine; that span reads IGS. Residues 429 to 431 and Glu482 each bind L-methionine; that span reads IGS. 5-methyltetrahydropteroyltri-L-glutamate-binding positions include 513-514 and Trp559; that span reads RC. Residue Asp597 participates in L-homocysteine binding. Residue Asp597 coordinates L-methionine. Glu603 serves as a coordination point for 5-methyltetrahydropteroyltri-L-glutamate. Zn(2+) contacts are provided by His639, Cys641, and Glu663. The active-site Proton donor is His692. A Zn(2+)-binding site is contributed by Cys724.

This sequence belongs to the vitamin-B12 independent methionine synthase family. The cofactor is Zn(2+).

It carries out the reaction 5-methyltetrahydropteroyltri-L-glutamate + L-homocysteine = tetrahydropteroyltri-L-glutamate + L-methionine. It functions in the pathway amino-acid biosynthesis; L-methionine biosynthesis via de novo pathway; L-methionine from L-homocysteine (MetE route): step 1/1. Functionally, catalyzes the transfer of a methyl group from 5-methyltetrahydrofolate to homocysteine resulting in methionine formation. The sequence is that of 5-methyltetrahydropteroyltriglutamate--homocysteine methyltransferase from Buchnera aphidicola subsp. Acyrthosiphon pisum (strain APS) (Acyrthosiphon pisum symbiotic bacterium).